The sequence spans 503 residues: ATP synthase subunit alpha (503 aa).

170–177 (GDKQTGKT) provides a ligand contact to ATP.

It belongs to the ATPase alpha/beta chains family. In terms of assembly, F-type ATPases have 2 components, CF(1) - the catalytic core - and CF(0) - the membrane proton channel. CF(1) has five subunits: alpha(3), beta(3), gamma(1), delta(1), epsilon(1). CF(0) has three main subunits: a(1), b(2) and c(9-12). The alpha and beta chains form an alternating ring which encloses part of the gamma chain. CF(1) is attached to CF(0) by a central stalk formed by the gamma and epsilon chains, while a peripheral stalk is formed by the delta and b chains.

The protein resides in the cell inner membrane. It carries out the reaction ATP + H2O + 4 H(+)(in) = ADP + phosphate + 5 H(+)(out). In terms of biological role, produces ATP from ADP in the presence of a proton gradient across the membrane. The alpha chain is a regulatory subunit. This Helicobacter pylori (strain Shi470) protein is ATP synthase subunit alpha.